Consider the following 463-residue polypeptide: Homoserine O-acetyltransferase FUB5 (463 aa).

Residues 113–436 (NVMIICHALS…VSDDGHDAFL (324 aa)) enclose the AB hydrolase-1 domain. The Nucleophile role is filled by Ser-211. Over residues 296–312 (RFGRDTGSKKKTQKQES) the composition is skewed to basic and acidic residues. The segment at 296-331 (RFGRDTGSKKKTQKQESKTLPSNSTPIHSHSGADET) is disordered. Active-site residues include Asp-403 and His-432.

The protein belongs to the AB hydrolase superfamily. MetX family.

The enzyme catalyses L-homoserine + acetyl-CoA = O-acetyl-L-homoserine + CoA. Its pathway is mycotoxin biosynthesis. Homoserine O-acetyltransferase; part of the gene cluster that mediates the biosynthesis of fusaric acid, a mycotoxin with low to moderate toxicity to animals and humans, but with high phytotoxic properties. L-aspartate is suggested as fusaric acid amino acid precursor that is activated and further processed to O-acetyl-L-homoserine by cluster enzymes aspartate kinase FUB3 and homoserine O-acetyltransferase FUB5, as well as enzymes of the primary metabolism. The polyketide synthase (PKS) FUB1 generates the triketide trans-2-hexenal which is presumptively released by the hydrolase FUB4 and linked to the NRPS-bound amino acid precursor by NAD(P)-dependent dehydrogenase FUB6. FUB1, FUB4, and the non-canonical NRPS Fub8 may form an enzyme complex. Further processing of the NRPS-bound intermediate might be carried out by FUB6 and the sulfhydrylase FUB7, enabling a spontaneous electrocyclization to close the carbon backbone of fusaric acid. Dihydrofusaric acid is likely to be released via reduction by the thioester reductase (TR) domain of FUB8 whereupon the final oxidation to fusaric acid may (also) be performed by the FMN-dependent dehydrogenase FUB9. The protein is Homoserine O-acetyltransferase FUB5 of Gibberella moniliformis (strain M3125 / FGSC 7600) (Maize ear and stalk rot fungus).